We begin with the raw amino-acid sequence, 199 residues long: Photosystem I reaction center subunit XI (199 aa).

Transmembrane regions (helical) follow at residues 108 to 128 (VTAG…LLVL) and 165 to 185 (FWLG…TLHL).

Belongs to the PsaL family.

It is found in the cellular thylakoid membrane. In Prochlorococcus marinus (strain MIT 9215), this protein is Photosystem I reaction center subunit XI.